A 605-amino-acid chain; its full sequence is Elongation factor 4 (605 aa).

Residues 11-193 enclose the tr-type G domain; that stretch reads KRIRNFSIIA…KVVSNIPSPR (183 aa). GTP is bound by residues 23–28 and 140–143; these read DHGKST and NKID.

It belongs to the TRAFAC class translation factor GTPase superfamily. Classic translation factor GTPase family. LepA subfamily.

The protein resides in the cell membrane. The enzyme catalyses GTP + H2O = GDP + phosphate + H(+). Functionally, required for accurate and efficient protein synthesis under certain stress conditions. May act as a fidelity factor of the translation reaction, by catalyzing a one-codon backward translocation of tRNAs on improperly translocated ribosomes. Back-translocation proceeds from a post-translocation (POST) complex to a pre-translocation (PRE) complex, thus giving elongation factor G a second chance to translocate the tRNAs correctly. Binds to ribosomes in a GTP-dependent manner. This is Elongation factor 4 from Phytoplasma mali (strain AT).